A 405-amino-acid chain; its full sequence is Acetate kinase (405 aa).

Asparagine 7 contacts Mg(2+). Lysine 14 serves as a coordination point for ATP. Arginine 92 is a binding site for substrate. The active-site Proton donor/acceptor is the aspartate 149. ATP-binding positions include 209 to 213 (HLGNG) and 284 to 286 (DMR). Glutamate 389 provides a ligand contact to Mg(2+).

It belongs to the acetokinase family. As to quaternary structure, homodimer. Mg(2+) is required as a cofactor. Mn(2+) serves as cofactor.

The protein localises to the cytoplasm. It carries out the reaction acetate + ATP = acetyl phosphate + ADP. It functions in the pathway metabolic intermediate biosynthesis; acetyl-CoA biosynthesis; acetyl-CoA from acetate: step 1/2. Catalyzes the formation of acetyl phosphate from acetate and ATP. Can also catalyze the reverse reaction. In Borrelia garinii subsp. bavariensis (strain ATCC BAA-2496 / DSM 23469 / PBi) (Borreliella bavariensis), this protein is Acetate kinase.